The sequence spans 125 residues: Large ribosomal subunit protein uL18 (125 aa).

The protein belongs to the universal ribosomal protein uL18 family. As to quaternary structure, part of the 50S ribosomal subunit; part of the 5S rRNA/L5/L18/L25 subcomplex. Contacts the 5S and 23S rRNAs.

Functionally, this is one of the proteins that bind and probably mediate the attachment of the 5S RNA into the large ribosomal subunit, where it forms part of the central protuberance. The polypeptide is Large ribosomal subunit protein uL18 (Anaplasma marginale (strain Florida)).